The following is a 186-amino-acid chain: Shikimate kinase (186 aa).

15–20 (GAGKTT) lines the ATP pocket. Residue threonine 19 coordinates Mg(2+). Aspartate 37, arginine 61, and glycine 83 together coordinate substrate. Arginine 121 contributes to the ATP binding site. A substrate-binding site is contributed by arginine 140.

The protein belongs to the shikimate kinase family. In terms of assembly, monomer. Mg(2+) is required as a cofactor.

The protein localises to the cytoplasm. It catalyses the reaction shikimate + ATP = 3-phosphoshikimate + ADP + H(+). Its pathway is metabolic intermediate biosynthesis; chorismate biosynthesis; chorismate from D-erythrose 4-phosphate and phosphoenolpyruvate: step 5/7. In terms of biological role, catalyzes the specific phosphorylation of the 3-hydroxyl group of shikimic acid using ATP as a cosubstrate. This is Shikimate kinase from Psychrobacter arcticus (strain DSM 17307 / VKM B-2377 / 273-4).